The sequence spans 148 residues: Putative lysozyme C-2 (148 aa).

The first 18 residues, 1–18, serve as a signal peptide directing secretion; sequence MKALLVLGFLLLSASVQA. A C-type lysozyme domain is found at 19–148; the sequence is KVFKHCELAR…LSGYIRNCGV (130 aa). Cystine bridges form between Cys-24–Cys-146, Cys-48–Cys-134, Cys-83–Cys-99, and Cys-95–Cys-113. Active-site residues include Glu-53 and Asp-71.

This sequence belongs to the glycosyl hydrolase 22 family. Monomer.

The protein localises to the secreted. The enzyme catalyses Hydrolysis of (1-&gt;4)-beta-linkages between N-acetylmuramic acid and N-acetyl-D-glucosamine residues in a peptidoglycan and between N-acetyl-D-glucosamine residues in chitodextrins.. In terms of biological role, lysozymes have primarily a bacteriolytic function; those in tissues and body fluids are associated with the monocyte-macrophage system and enhance the activity of immunoagents. In the intestine they may also have a digestive function. The chain is Putative lysozyme C-2 (Lyz2) from Rattus norvegicus (Rat).